Reading from the N-terminus, the 634-residue chain is Chaperone protein HtpG (634 aa).

Residues 1–344 form an a; substrate-binding region; it reads MNETVANNKE…SNDLPLNVSR (344 aa). The tract at residues 345–561 is b; sequence EILQDNKVTQ…DFEMGTQMAK (217 aa). The c stretch occupies residues 562–634; it reads LLAAAGQAVP…TAINSLLTKG (73 aa).

It belongs to the heat shock protein 90 family. Homodimer.

The protein localises to the cytoplasm. Its function is as follows. Molecular chaperone. Has ATPase activity. This Vibrio vulnificus (strain CMCP6) protein is Chaperone protein HtpG.